The following is a 523-amino-acid chain: Probable endopeptidase p60 (523 aa).

The first 27 residues, 1–27 (MNMKKATIAATAGIAVTAFAAPTIASA), serve as a signal peptide directing secretion. A LysM 1 domain is found at 28–71 (STVVVEAGDTLWGIAQDNGTTVDALKKANKLTTDKIVPGQKLQV). Residues 78 to 142 (KTEKSVSATW…VNGKYLGNAV (65 aa)) enclose the SH3b domain. The disordered stretch occupies residues 146-188 (PSATPEVKQEETTQAAPAQQTKTEVKQATPAATTEKDAVETKT). Residues 157-167 (TTQAAPAQQTK) are compositionally biased toward low complexity. Positions 198 to 241 (TTHTVKSGDTIWALSVKYGASVQDLMSWNNLSSSSIYVGQNIAV) constitute a LysM 2 domain. Low complexity-rich tracts occupy residues 251–282 (PKAE…TTTT) and 290–318 (EKQT…TNAS). 2 disordered regions span residues 251-323 (PKAE…YTVK) and 367-408 (ATNT…SSSA). Residues 318–361 (SSYTVKSGDTLGKIASTFGTTVSKIKALNGLTSDNLQVGDVLKV) form the LysM 3 domain. A NlpC/P60 domain is found at 405 to 523 (SSSASAIIAE…GQYLVGFGRV (119 aa)). The active-site Nucleophile is cysteine 435. Histidine 485 serves as the catalytic Proton acceptor. The active site involves asparagine 497.

Belongs to the peptidase C40 family.

This major extracellular protein may be involved in the invasion of non-professional phagocytic cells by Listeria. The protein is Probable endopeptidase p60 (iap) of Listeria seeligeri.